A 479-amino-acid polypeptide reads, in one-letter code: Isoprimeverose transporter (479 aa).

Transmembrane regions (helical) follow at residues 54–74 (MFFYTDVFGISAAIVGTLFLV), 102–122 (PYWLWFAIPFAVFSVLCFTVP), 131–151 (VWAYVTYIGVDVLYSAVNIPI), 174–194 (FMGTLGATIISTIALPLVAYF), 205–225 (WFMVALIMAVIAMVIFFIVFA), 253–273 (WPWVIVIFINFIYWLGMQTRS), 289–309 (LASFILGLQLVALLAVVITPW), 321–341 (LMGMLLAIVGQLILWGGSKAL), 348–368 (VGTIVGYLGTGFVSGLIAVML), 397–417 (FGMGIGGAVTGLILSAGGYVA), and 431–451 (MNYVWVPIVGFGLSAIALLFY).

It belongs to the sodium:galactoside symporter (TC 2.A.2) family.

It localises to the cell membrane. Functionally, involved in the metabolism of isoprimeverose. Transports isoprimeverose into the cell. Transport is driven by the proton motive force generated by malolactic fermentation. Cannot transport D-xylose. The polypeptide is Isoprimeverose transporter (Lactiplantibacillus pentosus (Lactobacillus pentosus)).